A 304-amino-acid polypeptide reads, in one-letter code: ERTVISNLRPFTLYRIDIHSCNHEAEKLGCSASNFVFARTMPAEGADDIPGPVTWEPRPENSIFLKWPEPENPNGLILMYEIKYGSQVEDQRECVSRQEYRKYGGAKLNRLNPGNYTARIQATSLSGNGSWTEPVFFYVQAKTTYENFIHLIIALPVAVLLIVGGLVIMLYVFHRKRNNSRLGNGVMLFELMRMCWQYNPKMRPSFLEIISSIKDEMEPGFREVSFYYSEENKPPEPEELDLEPENMESVPLDPSASSSSLPLPDRHSGHKAENGPGPGVLVLRASFDERQPYAHMNGGRKNER.

2 Fibronectin type-III domains span residues 1-43 and 49-142; these read ERTV…TMPA and IPGP…VQAK. The Extracellular segment spans residues 1–147; that stretch reads ERTVISNLRP…YVQAKTTYEN (147 aa). Asn-115 and Asn-128 each carry an N-linked (GlcNAc...) asparagine glycan. Residues 148-168 form a helical membrane-spanning segment; sequence FIHLIIALPVAVLLIVGGLVI. Topologically, residues 169-304 are cytoplasmic; sequence MLYVFHRKRN…HMNGGRKNER (136 aa). Position 225 is a phosphoserine; by GSK3-beta (Ser-225). The residue at position 229 (Ser-229) is a Phosphoserine. Residues 231–304 form a disordered region; it reads ENKPPEPEEL…HMNGGRKNER (74 aa). Acidic residues predominate over residues 237–246; it reads PEELDLEPEN. Over residues 247–263 the composition is skewed to low complexity; that stretch reads MESVPLDPSASSSSLPL. Residues 264–273 show a composition bias toward basic and acidic residues; that stretch reads PDRHSGHKAE.

The protein belongs to the protein kinase superfamily. Tyr protein kinase family. Insulin receptor subfamily. Tetramer of 2 alpha and 2 beta chains linked by disulfide bonds. The alpha chains contribute to the formation of the ligand-binding domain, while the beta chain carries the kinase domain. Forms a hybrid receptor with INSR, the hybrid is a tetramer consisting of 1 alpha chain and 1 beta chain of INSR and 1 alpha chain and 1 beta chain of IGF1R. Interacts with ARRB1 and ARRB2. Interacts with GRB10. Interacts with RACK1. Interacts with SOCS1, SOCS2 and SOCS3. Interacts with 14-3-3 proteins. Interacts with NMD2. Interacts with MAP3K5. Interacts with STAT3. Found in a ternary complex with IGF1 and ITGAV:ITGB3 or ITGA6:ITGB4. Interacts (nascent precursor form) with ZFAND2B. Autophosphorylated on tyrosine residues in response to ligand binding. Autophosphorylation occurs in trans, i.e. one subunit of the dimeric receptor phosphorylates tyrosine residues on the other subunit. Autophosphorylation occurs in a sequential manner. While every single phosphorylation increases kinase activity, all three tyrosine residues in the kinase activation loop have to be phosphorylated for optimal activity. Can be autophosphorylated at additional tyrosine residues (in vitro). May also be phosphorylated at tyrosine residues by mTORC2. Autophosphorylated is followed by phosphorylation of juxtamembrane tyrosines and C-terminal serines. Phosphorylation of Ser-225 by GSK-3beta restrains kinase activity and promotes cell surface expression, it requires a priming phosphorylation at Ser-229. Dephosphorylated by PTPN1. Post-translationally, polyubiquitinated in the activation loop through both 'Lys-48' and 'Lys-29' linkages, promoting receptor endocytosis and subsequent degradation by the proteasome. Ubiquitination is facilitated by pre-existing phosphorylation. In terms of processing, sumoylated with SUMO1. Controlled by regulated intramembrane proteolysis (RIP). Undergoes metalloprotease-dependent constitutive ectodomain shedding to produce a membrane-anchored 52 kDa C-Terminal fragment which is further processed by presenilin gamma-secretase to yield an intracellular 50 kDa fragment.

Its subcellular location is the cell membrane. The enzyme catalyses L-tyrosyl-[protein] + ATP = O-phospho-L-tyrosyl-[protein] + ADP + H(+). With respect to regulation, activated by autophosphorylation at tyrosines in the kinase activation loop; phosphorylation at all three tyrosine residues is required for optimal kinase activity. Inhibited by MSC1609119A-1, BMS-754807, PQIP, benzimidazole pyridinone, isoquinolinedione, bis-azaindole, 3-cyanoquinoline, 2,4-bis-arylamino-1,3-pyrimidine, pyrrolopyrimidine, pyrrole-5-carboxaldehyde, picropodophyllin (PPP), tyrphostin derivatives. While most inhibitors bind to the ATP binding pocket, MSC1609119A-1 functions as allosteric inhibitor and binds close to the DFG motif and the activation loop. Its function is as follows. Receptor tyrosine kinase which mediates actions of insulin-like growth factor 1 (IGF1). Binds IGF1 with high affinity and IGF2 and insulin (INS) with a lower affinity. The activated IGF1R is involved in cell growth and survival control. IGF1R is crucial for tumor transformation and survival of malignant cell. Ligand binding activates the receptor kinase, leading to receptor autophosphorylation, and tyrosines phosphorylation of multiple substrates, that function as signaling adapter proteins including, the insulin-receptor substrates (IRS1/2), Shc and 14-3-3 proteins. Phosphorylation of IRSs proteins lead to the activation of two main signaling pathways: the PI3K-AKT/PKB pathway and the Ras-MAPK pathway. The result of activating the MAPK pathway is increased cellular proliferation, whereas activating the PI3K pathway inhibits apoptosis and stimulates protein synthesis. Phosphorylated IRS1 can activate the 85 kDa regulatory subunit of PI3K (PIK3R1), leading to activation of several downstream substrates, including protein AKT/PKB. AKT phosphorylation, in turn, enhances protein synthesis through mTOR activation and triggers the antiapoptotic effects of IGFIR through phosphorylation and inactivation of BAD. In parallel to PI3K-driven signaling, recruitment of Grb2/SOS by phosphorylated IRS1 or Shc leads to recruitment of Ras and activation of the ras-MAPK pathway. In addition to these two main signaling pathways IGF1R signals also through the Janus kinase/signal transducer and activator of transcription pathway (JAK/STAT). Phosphorylation of JAK proteins can lead to phosphorylation/activation of signal transducers and activators of transcription (STAT) proteins. In particular activation of STAT3, may be essential for the transforming activity of IGF1R. The JAK/STAT pathway activates gene transcription and may be responsible for the transforming activity. JNK kinases can also be activated by the IGF1R. IGF1 exerts inhibiting activities on JNK activation via phosphorylation and inhibition of MAP3K5/ASK1, which is able to directly associate with the IGF1R. When present in a hybrid receptor with INSR, binds IGF1. The protein is Insulin-like growth factor 1 receptor (IGF1R) of Sus scrofa (Pig).